The following is a 382-amino-acid chain: UDP-4-amino-4-deoxy-L-arabinose--oxoglutarate aminotransferase (382 aa).

Lys-183 carries the post-translational modification N6-(pyridoxal phosphate)lysine.

The protein belongs to the DegT/DnrJ/EryC1 family. ArnB subfamily. In terms of assembly, homodimer. It depends on pyridoxal 5'-phosphate as a cofactor.

The enzyme catalyses UDP-4-amino-4-deoxy-beta-L-arabinose + 2-oxoglutarate = UDP-beta-L-threo-pentopyranos-4-ulose + L-glutamate. It participates in nucleotide-sugar biosynthesis; UDP-4-deoxy-4-formamido-beta-L-arabinose biosynthesis; UDP-4-deoxy-4-formamido-beta-L-arabinose from UDP-alpha-D-glucuronate: step 2/3. Its pathway is bacterial outer membrane biogenesis; lipopolysaccharide biosynthesis. Its function is as follows. Catalyzes the conversion of UDP-4-keto-arabinose (UDP-Ara4O) to UDP-4-amino-4-deoxy-L-arabinose (UDP-L-Ara4N). The modified arabinose is attached to lipid A and is required for resistance to polymyxin and cationic antimicrobial peptides. In Pseudomonas aeruginosa (strain ATCC 15692 / DSM 22644 / CIP 104116 / JCM 14847 / LMG 12228 / 1C / PRS 101 / PAO1), this protein is UDP-4-amino-4-deoxy-L-arabinose--oxoglutarate aminotransferase.